The chain runs to 938 residues: E3 ubiquitin-protein ligase CBL-B (938 aa).

Residues 35-167 form a 4H region; that stretch reads PPKQAAADRR…KAIFPNGQFQ (133 aa). Residues 35 to 343 form the Cbl-PTB domain; that stretch reads PPKQAAADRR…GRSYNPDLTG (309 aa). An EF-hand-like region spans residues 168 to 240; sequence GDNFRITKAD…FEFDIFTRLF (73 aa). Residues aspartate 221, threonine 223, asparagine 225, tyrosine 227, and glutamate 232 each coordinate Ca(2+). Residues 241-343 are SH2-like; the sequence is QPWGSILRNW…GRSYNPDLTG (103 aa). Serine 282 carries the post-translational modification Phosphoserine; by PKC/PRKCQ. Position 286 (arginine 286) interacts with 4-O-phospho-L-tyrosine. The linker stretch occupies residues 344 to 372; that stretch reads LCEPTPHDHIKVTQEQYELYCEMGSTFQL. Phosphotyrosine is present on tyrosine 363. An RING-type zinc finger spans residues 373 to 412; it reads CKICAENDKDVKIEPCGHLMCTSCLTAWQESDGQGCPFCR. The interval 465 to 588 is disordered; it reads ASVRKCTDRQ…SVPSRDQPMP (124 aa). The span at 473–486 shows a compositional bias: polar residues; the sequence is RQNSPVTSPGSSPL. 6 positions are modified to phosphoserine: serine 476, serine 480, serine 484, serine 521, serine 525, and serine 529. The segment at 543 to 567 is interaction with VAV1; that stretch reads PLPAPPPPLRDPPPPPERPPPIPPD. Positions 544 to 566 are enriched in pro residues; that stretch reads LPAPPPPLRDPPPPPERPPPIPP. Position 633 is a phosphoserine (serine 633). Tyrosine 664 and tyrosine 708 each carry phosphotyrosine. Disordered regions lie at residues 702-725 and 771-885; these read EEDD…PSHC and DALP…EAAL. Positions 714–724 are enriched in polar residues; sequence HPVSLNSQPSH. Positions 775–784 are enriched in pro residues; the sequence is PSLPPPPPPA. The segment covering 794-804 has biased composition (low complexity); the sequence is PPGSSSRPSSG. Residues 839 to 855 show a composition bias toward polar residues; sequence NRASQDYDQLPSSSDGS. A Phosphotyrosine modification is found at tyrosine 845. The interaction with SH3KBP1 stretch occupies residues 847-883; sequence QLPSSSDGSQAPARPPKPRPRRTAPEIHHRKPHGPEA. The span at 862–878 shows a compositional bias: basic residues; sequence PKPRPRRTAPEIHHRKP. Positions 887–926 constitute a UBA domain; it reads NVDAKIAKLMGEGYAFEEVKRALEIAQNNLEVARSILREF.

In terms of assembly, interacts with SH3 domain-containing proteins LCK, CRK and SORBS1. Interacts with LCP2 and ZAP70. Interacts with CBL. Interacts with SH3 domain-containing proteins VAV1, FYN, FGR, PLCG1, GRB2, CRKL, PIK3R1 and SH3KBP1/CIN85. Identified in heterotrimeric complexes with SH3KBP1/CIN85, CD2AP and ARHGEF7, where one CBLB peptide binds two copies of the other protein. Interacts with poly-ubiquitinated proteins. Dimerization is required for the binding of poly-ubiquitin, but not for the binding of mono-ubiquitin. Interacts with EGFR (phosphorylated). Interacts with IFT20. In terms of processing, phosphorylated on tyrosine and serine residues upon TCR or BCR activation, and upon various types of cell stimulation. Post-translationally, auto-ubiquitinated upon EGF-mediated cell activation or upon T-cell costimulation by CD28; which promotes proteasomal degradation.

The protein resides in the cytoplasm. It catalyses the reaction S-ubiquitinyl-[E2 ubiquitin-conjugating enzyme]-L-cysteine + [acceptor protein]-L-lysine = [E2 ubiquitin-conjugating enzyme]-L-cysteine + N(6)-ubiquitinyl-[acceptor protein]-L-lysine.. The protein operates within protein modification; protein ubiquitination. Functionally, E3 ubiquitin-protein ligase which accepts ubiquitin from specific E2 ubiquitin-conjugating enzymes, and transfers it to substrates, generally promoting their degradation by the proteasome. Negatively regulates TCR (T-cell receptor), BCR (B-cell receptor) and FCER1 (high affinity immunoglobulin epsilon receptor) signal transduction pathways. In naive T-cells, inhibits VAV1 activation upon TCR engagement and imposes a requirement for CD28 costimulation for proliferation and IL-2 production. Also acts by promoting PIK3R1/p85 ubiquitination, which impairs its recruitment to the TCR and subsequent activation. In activated T-cells, inhibits PLCG1 activation and calcium mobilization upon restimulation and promotes anergy. In B-cells, acts by ubiquitinating SYK and promoting its proteasomal degradation. Slightly promotes SRC ubiquitination. May be involved in EGFR ubiquitination and internalization. May be functionally coupled with the E2 ubiquitin-protein ligase UB2D3. In association with CBL, required for proper feedback inhibition of ciliary platelet-derived growth factor receptor-alpha (PDGFRA) signaling pathway via ubiquitination and internalization of PDGFRA. In Rattus norvegicus (Rat), this protein is E3 ubiquitin-protein ligase CBL-B (Cblb).